A 59-amino-acid chain; its full sequence is Putative zinc finger protein ORF59a (59 aa).

A C2H2-type; degenerate zinc finger spans residues 11–33 (YQCLRCGLTFRTKKQLIRHLVNT).

This chain is Putative zinc finger protein ORF59a, found in Acidianus hospitalis (AFV-1).